Here is a 139-residue protein sequence, read N- to C-terminus: Nucleoside diphosphate kinase (139 aa).

The ATP site is built by lysine 11, phenylalanine 59, arginine 87, threonine 93, arginine 104, and asparagine 114. Histidine 117 (pros-phosphohistidine intermediate) is an active-site residue.

It belongs to the NDK family. In terms of assembly, homotetramer. Mg(2+) is required as a cofactor.

The protein localises to the cytoplasm. It catalyses the reaction a 2'-deoxyribonucleoside 5'-diphosphate + ATP = a 2'-deoxyribonucleoside 5'-triphosphate + ADP. The catalysed reaction is a ribonucleoside 5'-diphosphate + ATP = a ribonucleoside 5'-triphosphate + ADP. Major role in the synthesis of nucleoside triphosphates other than ATP. The ATP gamma phosphate is transferred to the NDP beta phosphate via a ping-pong mechanism, using a phosphorylated active-site intermediate. The sequence is that of Nucleoside diphosphate kinase from Wolbachia sp. subsp. Brugia malayi (strain TRS).